The chain runs to 163 residues: NADH-quinone oxidoreductase subunit I 1 (163 aa).

2 consecutive 4Fe-4S ferredoxin-type domains span residues 53–83 and 94–123; these read LRRY…IEAG and VRYD…EGPN. Residues Cys63, Cys66, Cys69, Cys73, Cys103, Cys106, Cys109, and Cys113 each contribute to the [4Fe-4S] cluster site.

The protein belongs to the complex I 23 kDa subunit family. NDH-1 is composed of 14 different subunits. Subunits NuoA, H, J, K, L, M, N constitute the membrane sector of the complex. [4Fe-4S] cluster serves as cofactor.

The protein localises to the cell inner membrane. It catalyses the reaction a quinone + NADH + 5 H(+)(in) = a quinol + NAD(+) + 4 H(+)(out). NDH-1 shuttles electrons from NADH, via FMN and iron-sulfur (Fe-S) centers, to quinones in the respiratory chain. The immediate electron acceptor for the enzyme in this species is believed to be ubiquinone. Couples the redox reaction to proton translocation (for every two electrons transferred, four hydrogen ions are translocated across the cytoplasmic membrane), and thus conserves the redox energy in a proton gradient. The protein is NADH-quinone oxidoreductase subunit I 1 of Rhizobium etli (strain ATCC 51251 / DSM 11541 / JCM 21823 / NBRC 15573 / CFN 42).